The primary structure comprises 1582 residues: Hybrid PKS-NRPS synthetase TAS1 (1582 aa).

The segment at 33–387 (IPLSKVQEVL…GEDTAAASRV (355 aa)) is condensation (C) domain. Residues 499 to 892 (RSRAATQPDE…KLHILGRMNN (394 aa)) are adenylation (A) domain. In terms of domain architecture, Carrier spans 1015 to 1092 (NLVDRLEASI…RQAQRLSELV (78 aa)). The Ketosynthase family 3 (KS3) domain occupies 1127–1574 (APLFAIVGMA…GVNAHCILAS (448 aa)). Active-site for beta-ketoacyl synthase activity residues include cysteine 1294 and histidine 1432. The disordered stretch occupies residues 1460–1485 (ESRCSSGAISPTGTEQQPSDTKQTPR). Polar residues predominate over residues 1462-1485 (RCSSGAISPTGTEQQPSDTKQTPR). The active-site For beta-ketoacyl synthase activity is the asparagine 1498.

In the N-terminal section; belongs to the NRP synthetase family. Pantetheine 4'-phosphate serves as cofactor.

It catalyses the reaction acetoacetyl-CoA + L-isoleucine + ATP = tenuazonic acid + AMP + diphosphate + CoA + 2 H(+). Hybrid PKS-NRPS synthetase that mediates the biosynthesis of the toxin tenuazonic acid (TeA), an inhibitor of protein biosynthesis on ribosomes by suppressing the release of new protein. TAS1 alone is sufficient for TeA synthesis via the condensation of isoleucine (Ile) with acetoacetyl-CoA by the N-terminal NRPS module and subsequent cyclization conducted by the C-terminal KS domain. The sequence is that of Hybrid PKS-NRPS synthetase TAS1 from Cordyceps militaris (strain CM01) (Caterpillar fungus).